We begin with the raw amino-acid sequence, 121 residues long: MPISQAFTRQHRLLTGPQYQTVFDQPEWKVGLGGYLLLVTRNSQPHPRLGLVIGRKRVKRAVDRARIKRRVREQFRCRQQELAGLDIILLVRGRIENPNPNQVTLDITRLFDKLLAKCRQA.

It belongs to the RnpA family. As to quaternary structure, consists of a catalytic RNA component (M1 or rnpB) and a protein subunit.

It catalyses the reaction Endonucleolytic cleavage of RNA, removing 5'-extranucleotides from tRNA precursor.. RNaseP catalyzes the removal of the 5'-leader sequence from pre-tRNA to produce the mature 5'-terminus. It can also cleave other RNA substrates such as 4.5S RNA. The protein component plays an auxiliary but essential role in vivo by binding to the 5'-leader sequence and broadening the substrate specificity of the ribozyme. The sequence is that of Ribonuclease P protein component from Alcanivorax borkumensis (strain ATCC 700651 / DSM 11573 / NCIMB 13689 / SK2).